We begin with the raw amino-acid sequence, 254 residues long: 3-dehydroquinate dehydratase (254 aa).

3-dehydroquinate contacts are provided by residues 47-49 and arginine 83; that span reads EFR. Histidine 144 (proton donor/acceptor) is an active-site residue. Lysine 171 serves as the catalytic Schiff-base intermediate with substrate. 3-dehydroquinate contacts are provided by arginine 213, serine 232, and glutamine 236.

The protein belongs to the type-I 3-dehydroquinase family. Homodimer.

The catalysed reaction is 3-dehydroquinate = 3-dehydroshikimate + H2O. Its pathway is metabolic intermediate biosynthesis; chorismate biosynthesis; chorismate from D-erythrose 4-phosphate and phosphoenolpyruvate: step 3/7. Involved in the third step of the chorismate pathway, which leads to the biosynthesis of aromatic amino acids. Catalyzes the cis-dehydration of 3-dehydroquinate (DHQ) and introduces the first double bond of the aromatic ring to yield 3-dehydroshikimate. The polypeptide is 3-dehydroquinate dehydratase (Neisseria gonorrhoeae (strain ATCC 700825 / FA 1090)).